A 425-amino-acid chain; its full sequence is MRRAGAACSAMDRLRLLLLLILGVSSGGAKETCSTGLYTHSGECCKACNLGEGVAQPCGANQTVCEPCLDNVTFSDVVSATEPCKPCTECLGLQSMSAPCVEADDAVCRCAYGYYQDEETGHCEACSVCEVGSGLVFSCQDKQNTVCEECPEGTYSDEANHVDPCLPCTVCEDTERQLRECTPWADAECEEIPGRWIPRSTPPEGSDSTAPSTQEPEVPPEQDLVPSTVADMVTTVMGSSQPVVTRGTTDNLIPVYCSILAAVVVGLVAYIAFKRWNSCKQNKQGANSRPVNQTPPPEGEKLHSDSGISVDSQSLHDQQTHTQTASGQALKGDGNLYSSLPLTKREEVEKLLNGDTWRHLAGELGYQPEHIDSFTHEACPVRALLASWGAQDSATLDALLAALRRIQRADIVESLCSESTATSPV.

A signal peptide spans 1 to 29 (MRRAGAACSAMDRLRLLLLLILGVSSGGA). Residues 30–253 (KETCSTGLYT…VTRGTTDNLI (224 aa)) lie on the Extracellular side of the membrane. 4 TNFR-Cys repeats span residues 32-65 (TCSTGLYTHSGECCKACNLGEGVAQPCGANQTVC), 67-108 (PCLD…DAVC), 109-147 (RCAYGYYQDEETGHCEACSVCEVGSGLVFSCQDKQNTVC), and 149-189 (ECPE…DAEC). 12 cysteine pairs are disulfide-bonded: C33/C44, C45/C58, C48/C65, C68/C84, C87/C100, C90/C108, C110/C123, C126/C139, C129/C147, C150/C165, C168/C181, and C171/C189. N61 and N71 each carry an N-linked (GlcNAc...) asparagine glycan. A disordered region spans residues 193 to 225 (PGRWIPRSTPPEGSDSTAPSTQEPEVPPEQDLV). Residues 206 to 215 (SDSTAPSTQE) show a composition bias toward polar residues. Residues 254 to 274 (PVYCSILAAVVVGLVAYIAFK) form a helical membrane-spanning segment. Residues 275–425 (RWNSCKQNKQ…CSESTATSPV (151 aa)) are Cytoplasmic-facing. 2 stretches are compositionally biased toward polar residues: residues 282-292 (NKQGANSRPVN) and 306-327 (SGISVDSQSLHDQQTHTQTASG). Positions 282–332 (NKQGANSRPVNQTPPPEGEKLHSDSGISVDSQSLHDQQTHTQTASGQALKG) are disordered. S312 carries the post-translational modification Phosphoserine. The interval 327 to 342 (GQALKGDGNLYSSLPL) is mediates interaction with KIDINS220. A Death domain is found at 354-419 (GDTWRHLAGE…DIVESLCSES (66 aa)).

As to quaternary structure, homodimer; disulfide-linked. Heterodimer with SORCS2. The extracellular domains of the heterodimer bind NGF. The cytoplasmic region of the heterodimer binds TRIO. NGF binding mediates dissociation of TRIO from the receptor complex. Interacts with RTN4R. Interacts with TRAF2, TRAF4 and TRAF6. Interacts with PTPN13 and RANBP9. Interacts through TRAF6 with SQSTM1 which bridges NGFR to NTRK1. Interacts with BEX1. Interacts with BEX3. Interacts with KIDINS220 and NTRK1. Can form a ternary complex with NTRK1 and KIDINS220 and this complex is affected by the expression levels of KIDINS220. An increase in KIDINS220 expression leads to a decreased association of NGFR and NTRK1. Interacts (via death domain) with RAB31. Interacts with NTRK2; may regulate the ligand specificity of the NTRK2 receptor. Interacts with LINGO1. Interacts with NRADD. Interacts with MAGED1; the interaction antagonizes the association NGFR:NTRK1. Interacts (via death domain) with ARHGDIA and RIPK2. Interacts with BFAR. In terms of processing, subject to intramembrane proteolytic cleavage by the gamma-secretase complex, giving rise to an intracellular fragment that is rapidly degraded via the proteasome. Post-translationally, N- and O-glycosylated. Phosphorylated on serine residues.

Its subcellular location is the cell membrane. The protein localises to the cytoplasm. The protein resides in the perikaryon. It localises to the cell projection. It is found in the growth cone. Its subcellular location is the dendritic spine. Low affinity receptor which can bind to NGF, BDNF, NTF3, and NTF4. Forms a heterodimeric receptor with SORCS2 that binds the precursor forms of NGF, BDNF and NTF3 with high affinity, and has much lower affinity for mature NGF and BDNF. In response to proNGF binding, the heterodimeric receptor with SORCS2 activates a signaling cascade that leads to decreased Rac activity, reorganization of the actin cytoskeleton and neuronal growth cone collapse. Plays an important role in differentiation and survival of specific neuronal populations during development. Can mediate cell survival as well as cell death of neural cells. Plays a role in the inactivation of RHOA. Plays a role in the regulation of the translocation of GLUT4 to the cell surface in adipocytes and skeletal muscle cells in response to insulin, probably by regulating RAB31 activity, and thereby contributes to the regulation of insulin-dependent glucose uptake. Necessary for the circadian oscillation of the clock genes BMAL1, PER1, PER2 and NR1D1 in the suprachiasmatic nucleus (SCN) of the brain and in liver and of the genes involved in glucose and lipid metabolism in the liver. The polypeptide is Tumor necrosis factor receptor superfamily member 16 (Ngfr) (Rattus norvegicus (Rat)).